A 102-amino-acid chain; its full sequence is Trans-acting regulatory protein HvrA (102 aa).

Residues 80 to 85 (RGRKPK) mediate DNA binding.

Belongs to the histone-like protein H-NS family. In terms of assembly, homodimer that oligomerizes on DNA into higher-order complexes that form bridges between disparate regions of DNA compacting it.

It is found in the cytoplasm. The protein resides in the nucleoid. Its function is as follows. A dim-light trans-acting activator of Puf and Puh expression, that has no effect on the expression of the Puc operon. Responsible for regulating light-harvesting-I and reaction center structural gene expression differentially from that of light-harvesting-II expression in response to alterations in light. Proper light regulation of light-harvesting and reaction center polypeptide synthesis is an important physiological trait that enables cells to adapt to ever-changing environmental conditions of light intensity. The sequence is that of Trans-acting regulatory protein HvrA (hvrA) from Rhodobacter capsulatus (Rhodopseudomonas capsulata).